We begin with the raw amino-acid sequence, 387 residues long: 3-ketoacyl-CoA thiolase (387 aa).

C91 (acyl-thioester intermediate) is an active-site residue. Active-site proton acceptor residues include H343 and C373.

The protein belongs to the thiolase-like superfamily. Thiolase family. In terms of assembly, heterotetramer of two alpha chains (FadB) and two beta chains (FadA).

It localises to the cytoplasm. The catalysed reaction is an acyl-CoA + acetyl-CoA = a 3-oxoacyl-CoA + CoA. Its pathway is lipid metabolism; fatty acid beta-oxidation. Catalyzes the final step of fatty acid oxidation in which acetyl-CoA is released and the CoA ester of a fatty acid two carbons shorter is formed. The sequence is that of 3-ketoacyl-CoA thiolase from Salmonella choleraesuis (strain SC-B67).